The following is a 497-amino-acid chain: Ethanolamine-phosphate phospho-lyase (497 aa).

K278 is subject to N6-(pyridoxal phosphate)lysine. The segment at 440 to 497 is disordered; it reads TGAETESGISKNTPCRTKMPKEAQSELLRDSSLESRENPSQKRNGLCTDSLLSKRLRT. Over residues 458-479 the composition is skewed to basic and acidic residues; it reads MPKEAQSELLRDSSLESRENPS.

It belongs to the class-III pyridoxal-phosphate-dependent aminotransferase family. In terms of assembly, homotetramer. Requires pyridoxal 5'-phosphate as cofactor.

Its subcellular location is the mitochondrion. It catalyses the reaction phosphoethanolamine + H2O = acetaldehyde + NH4(+) + phosphate. Functionally, catalyzes the pyridoxal-phosphate-dependent breakdown of phosphoethanolamine, converting it to ammonia, inorganic phosphate and acetaldehyde. The polypeptide is Ethanolamine-phosphate phospho-lyase (ETNPPL) (Bos taurus (Bovine)).